A 157-amino-acid chain; its full sequence is Large ribosomal subunit protein bL20 (157 aa).

Positions threonine 121–lysine 157 are disordered. A compositionally biased stretch (low complexity) spans serine 122–alanine 134. The span at lysine 135–alanine 147 shows a compositional bias: basic residues.

The protein belongs to the bacterial ribosomal protein bL20 family.

Functionally, binds directly to 23S ribosomal RNA and is necessary for the in vitro assembly process of the 50S ribosomal subunit. It is not involved in the protein synthesizing functions of that subunit. The polypeptide is Large ribosomal subunit protein bL20 (rplT) (Arthrobacter sp. (strain FB24)).